Here is a 234-residue protein sequence, read N- to C-terminus: Sugar fermentation stimulation protein A (234 aa).

Residues 201–220 constitute a DNA-binding region (H-T-H motif); the sequence is LLSEAQQRGVEILAYKAEIS.

Belongs to the SfsA family.

In terms of biological role, binds to DNA non-specifically. Could be a regulatory factor involved in maltose metabolism. This is Sugar fermentation stimulation protein A from Shigella boydii serotype 4 (strain Sb227).